A 251-amino-acid polypeptide reads, in one-letter code: Flap endonuclease Xni (251 aa).

Aspartate 104 lines the Mg(2+) pocket. The 90-residue stretch at 160–249 (VLPRQLPDYW…IDGNLQQLRL (90 aa)) folds into the 5'-3' exonuclease domain. Leucine 171, alanine 172, proline 180, valine 182, and isoleucine 185 together coordinate K(+). The tract at residues 184–189 (GIGPKS) is interaction with DNA.

This sequence belongs to the Xni family. It depends on Mg(2+) as a cofactor. Requires K(+) as cofactor.

In terms of biological role, has flap endonuclease activity. During DNA replication, flap endonucleases cleave the 5'-overhanging flap structure that is generated by displacement synthesis when DNA polymerase encounters the 5'-end of a downstream Okazaki fragment. The polypeptide is Flap endonuclease Xni (Salmonella typhimurium (strain LT2 / SGSC1412 / ATCC 700720)).